The following is a 315-amino-acid chain: Methionyl-tRNA formyltransferase (315 aa).

113-116 (SLLP) contacts (6S)-5,6,7,8-tetrahydrofolate.

This sequence belongs to the Fmt family.

The enzyme catalyses L-methionyl-tRNA(fMet) + (6R)-10-formyltetrahydrofolate = N-formyl-L-methionyl-tRNA(fMet) + (6S)-5,6,7,8-tetrahydrofolate + H(+). Its function is as follows. Attaches a formyl group to the free amino group of methionyl-tRNA(fMet). The formyl group appears to play a dual role in the initiator identity of N-formylmethionyl-tRNA by promoting its recognition by IF2 and preventing the misappropriation of this tRNA by the elongation apparatus. The protein is Methionyl-tRNA formyltransferase of Escherichia coli O127:H6 (strain E2348/69 / EPEC).